Reading from the N-terminus, the 115-residue chain is U3-lycotoxin-Ls1a (115 aa).

The N-terminal stretch at 1–20 (MKFVLLFGVLLLTLFSYSSA) is a signal peptide. The propeptide occupies 21–44 (EMLDDFDQADEDELLSLIEKEEAR). Disulfide bonds link C48–C63, C55–C72, C62–C87, and C74–C85.

Belongs to the neurotoxin 19 (CSTX) family. 01 subfamily. As to expression, expressed by the venom gland.

It is found in the secreted. The protein is U3-lycotoxin-Ls1a of Lycosa singoriensis (Wolf spider).